The sequence spans 631 residues: Chaperone protein DnaK (631 aa).

A Phosphothreonine; by autocatalysis modification is found at threonine 197. Positions 598 to 631 (MYKKEQGQTGGTEQGGTEQKKSGGDDDVIDAEVE) are disordered. Over residues 622 to 631 (DDDVIDAEVE) the composition is skewed to acidic residues.

It belongs to the heat shock protein 70 family.

Acts as a chaperone. In Nitratiruptor sp. (strain SB155-2), this protein is Chaperone protein DnaK.